A 468-amino-acid polypeptide reads, in one-letter code: Interstitial collagenase (468 aa).

The signal sequence occupies residues 1 to 18 (MPGLPLLLLLLWGVGSHG). Positions 19-98 (FPAASETQEQ…PRCGVPDVAQ (80 aa)) are cleaved as a propeptide — activation peptide. The Cysteine switch motif lies at 89–96 (PRCGVPDV). C91 contacts Zn(2+). N119 carries N-linked (GlcNAc...) asparagine glycosylation. D123 and D157 together coordinate Ca(2+). Zn(2+)-binding residues include H167 and D169. The Ca(2+) site is built by D174, G175, E177, and Q179. H182 contributes to the Zn(2+) binding site. Residues G189, G191, and D193 each contribute to the Ca(2+) site. Residue H195 participates in Zn(2+) binding. 3 residues coordinate Ca(2+): D197, E198, and D200. H217 provides a ligand contact to Zn(2+). E218 is an active-site residue. Residues H221 and H227 each contribute to the Zn(2+) site. Residue T273 is modified to Phosphothreonine. Hemopexin repeat units lie at residues 274 to 323 (PKVC…WPHL), 324 to 370 (PNGL…FGFP), 373 to 421 (VNHI…FPGI), and 422 to 465 (GNKV…WFNC). A disulfide bridge links C277 with C465. Residues D284 and Q328 each contribute to the Ca(2+) site. A Phosphotyrosine; by PKDCC modification is found at Y359. Ca(2+) is bound by residues D377 and D426.

The protein belongs to the peptidase M10A family. It depends on Ca(2+) as a cofactor. The cofactor is Zn(2+). Post-translationally, tyrosine phosphorylated in platelets by PKDCC/VLK.

The protein localises to the secreted. It localises to the extracellular space. Its subcellular location is the extracellular matrix. It catalyses the reaction Cleavage of the triple helix of collagen at about three-quarters of the length of the molecule from the N-terminus, at 775-Gly-|-Ile-776 in the alpha1(I) chain. Cleaves synthetic substrates and alpha-macroglobulins at bonds where P1' is a hydrophobic residue.. Its activity is regulated as follows. Can be activated without removal of the activation peptide. Its function is as follows. Cleaves collagens of types I, II, and III at one site in the helical domain. Also cleaves collagens of types VII and X. This chain is Interstitial collagenase (MMP1), found in Oryctolagus cuniculus (Rabbit).